A 235-amino-acid polypeptide reads, in one-letter code: MSNKLLYSGKAKDIFSTDDEQVILARYKDQATAFNGVKKEQIAGKGVLNNQISSFIFEKLNAAGVATHFIGKVSDTDQLNKKVEIIPLEVVLRNYTAGSFSKRFGVEEGIALETPIVEFYYKNDDLDDPFINDEHVKFLKIASDQEIAFLKEETRRINKLLSDWFRQIGLKLIDFKLEFGFDKDGKIILADEFSPDNCRLWDAEGHHMDKDVFRRGLGELTDVYQVVWEKLQAIK.

It belongs to the SAICAR synthetase family.

It catalyses the reaction 5-amino-1-(5-phospho-D-ribosyl)imidazole-4-carboxylate + L-aspartate + ATP = (2S)-2-[5-amino-1-(5-phospho-beta-D-ribosyl)imidazole-4-carboxamido]succinate + ADP + phosphate + 2 H(+). Its pathway is purine metabolism; IMP biosynthesis via de novo pathway; 5-amino-1-(5-phospho-D-ribosyl)imidazole-4-carboxamide from 5-amino-1-(5-phospho-D-ribosyl)imidazole-4-carboxylate: step 1/2. The protein is Phosphoribosylaminoimidazole-succinocarboxamide synthase of Streptococcus sanguinis (strain SK36).